We begin with the raw amino-acid sequence, 609 residues long: Replication protein E1 (609 aa).

The Nuclear localization signal motif lies at 81–83 (KRK). Serine 87 and serine 94 each carry phosphoserine; by host. Positions 93 to 102 (LSPRLQSITI) match the Nuclear export signal motif. The tract at residues 149–312 (QGVKGLGIVK…TMINHQTAQA (164 aa)) is DNA-binding region. Positions 411-561 (INFIRFLDIF…FPFDNNNMPQ (151 aa)) constitute an SF3 helicase domain. 437 to 444 (GPPDTGKS) serves as a coordination point for ATP. Lysine 518 is covalently cross-linked (Glycyl lysine isopeptide (Lys-Gly) (interchain with G-Cter in SUMO)). Positions 584–609 (DQEEEGDDGQSQRTFQCTAREPNGHL) are disordered.

It belongs to the papillomaviridae E1 protein family. Can form hexamers. Interacts with E2 protein; this interaction increases E1 DNA binding specificity. Interacts with host DNA polymerase subunit POLA2. Interacts with host single stranded DNA-binding protein RPA1. Interacts with host TOP1; this interaction stimulates the enzymatic activity of TOP1. In terms of processing, phosphorylated. Sumoylated.

It is found in the host nucleus. The enzyme catalyses Couples ATP hydrolysis with the unwinding of duplex DNA by translocating in the 3'-5' direction.. It carries out the reaction ATP + H2O = ADP + phosphate + H(+). Functionally, ATP-dependent DNA 3'-5' helicase required for initiation of viral DNA replication. It forms a complex with the viral E2 protein. The E1-E2 complex binds to the replication origin which contains binding sites for both proteins. During the initial step, a dimer of E1 interacts with a dimer of protein E2 leading to a complex that binds the viral origin of replication with high specificity. Then, a second dimer of E1 displaces the E2 dimer in an ATP-dependent manner to form the E1 tetramer. Following this, two E1 monomers are added to each half of the site, which results in the formation of two E1 trimers on the viral ori. Subsequently, two hexamers will be created. The double hexamer acts as a bi-directional helicase machinery and unwinds the viral DNA and then recruits the host DNA polymerase to start replication. This chain is Replication protein E1, found in Homo sapiens (Human).